A 177-amino-acid polypeptide reads, in one-letter code: Bifunctional protein PyrR (177 aa).

The PRPP-binding signature appears at 99 to 111 (VVLVDDVLFTGRT).

The protein belongs to the purine/pyrimidine phosphoribosyltransferase family. PyrR subfamily.

It carries out the reaction UMP + diphosphate = 5-phospho-alpha-D-ribose 1-diphosphate + uracil. Regulates the transcription of the pyrimidine nucleotide (pyr) operon in response to exogenous pyrimidines. Functionally, also displays a weak uracil phosphoribosyltransferase activity which is not physiologically significant. This is Bifunctional protein PyrR from Citrifermentans bemidjiense (strain ATCC BAA-1014 / DSM 16622 / JCM 12645 / Bem) (Geobacter bemidjiensis).